Consider the following 109-residue polypeptide: Protein phosphatase 1 regulatory subunit 1C (109 aa).

The segment at 25–109 (AEQIRKRRPT…TNEREEQRDH (85 aa)) is disordered. Residues 45–54 (NPPEIDDKRV) are compositionally biased toward basic and acidic residues. Residues 55-75 (PNTQGELQNASPKQRKQSVYT) are compositionally biased toward polar residues. The span at 100 to 109 (TNEREEQRDH) shows a compositional bias: basic and acidic residues.

It belongs to the protein phosphatase inhibitor 1 family.

It localises to the cytoplasm. Its function is as follows. May increase cell susceptibility to TNF-induced apoptosis. This Pongo abelii (Sumatran orangutan) protein is Protein phosphatase 1 regulatory subunit 1C (PPP1R1C).